An 860-amino-acid polypeptide reads, in one-letter code: MTEYTPMIKQYLEIKDKYQDAFLFFRLGDFYEMFFEDALNASQILEITLTGREGGTKEKIPMCGVPYHSASGYIDTLIEKGYKVAICEQVEDPKTTKGMVKREVVQLISPGTVMDERGLKAKENNYIASLYCYEGKEYGFAYSDLSTGELKSTVIEASEDRLINELTTLSTRELIVSESEKTVLSDVMKEQLGLTFSVHEEDTIPSENEKLVTRHMSLSEKRAIGKLLHYLKETQKRDLGHLQQAVHYETSNYMKMDYYSKRNLELAESIRGKGRQGTLLWLLDNTQTAMGGRMLKQWIDRPLIDRKKIIERQNDVSELMANFFERLELVENLKNVYDLERLAGRVAYGNVNARDLIQLRNSLYQIPRIRATLLSMNSKSLTELANQLDPCEQLTEKLEEAIMDSAPISIREGGIIKDGYNSQLDTYRDASRNGKTWIAELERKERELTGIKTMKVGFNRVFGYYIEVTRANTHLLPEGRYERKQTLTNAERYITPELKEKEKLILDAEEKSMELEYLLFTEVREMVKDYIERLQKLAKSVSEIDCLQSFADISEKNHFIRPTLSEDGSLHVKQGRHPVVEKVMGAQSYVANDCDLDENREILLITGPNMSGKSTYMRQVALTAICAQVGCFVPAEEATLPIFDQIFTRIGAADDLIAGQSTFMVEMLEARNAIVHATKDSLILFDEIGRGTATYDGMALAQAIIEYIHENVHAKTLFSTHYHELTDLEKELRGLQNIHVSAVEENGKVVFLHKIKEGPADKSYGIHVAELAELPKSLIERASRILEQLENENKKIIITNEKQPEEIHEEVQLSMFPVEPEKKTSSKETKLIKEIASMNIMQMTPMDAMNKLYELQSKIH.

607–614 (GPNMSGKS) lines the ATP pocket.

The protein belongs to the DNA mismatch repair MutS family.

Its function is as follows. This protein is involved in the repair of mismatches in DNA. It is possible that it carries out the mismatch recognition step. This protein has a weak ATPase activity. This is DNA mismatch repair protein MutS from Listeria welshimeri serovar 6b (strain ATCC 35897 / DSM 20650 / CCUG 15529 / CIP 8149 / NCTC 11857 / SLCC 5334 / V8).